Here is a 169-residue protein sequence, read N- to C-terminus: Endoribonuclease YbeY (169 aa).

Positions 128, 132, and 138 each coordinate Zn(2+).

It belongs to the endoribonuclease YbeY family. Zn(2+) is required as a cofactor.

Its subcellular location is the cytoplasm. In terms of biological role, single strand-specific metallo-endoribonuclease involved in late-stage 70S ribosome quality control and in maturation of the 3' terminus of the 16S rRNA. This Cyanothece sp. (strain PCC 7425 / ATCC 29141) protein is Endoribonuclease YbeY.